Consider the following 261-residue polypeptide: 1-(5-phosphoribosyl)-5-[(5-phosphoribosylamino)methylideneamino] imidazole-4-carboxamide isomerase (261 aa).

The active-site Proton acceptor is the D8. Catalysis depends on D130, which acts as the Proton donor.

The protein belongs to the HisA/HisF family.

Its subcellular location is the cytoplasm. The catalysed reaction is 1-(5-phospho-beta-D-ribosyl)-5-[(5-phospho-beta-D-ribosylamino)methylideneamino]imidazole-4-carboxamide = 5-[(5-phospho-1-deoxy-D-ribulos-1-ylimino)methylamino]-1-(5-phospho-beta-D-ribosyl)imidazole-4-carboxamide. The protein operates within amino-acid biosynthesis; L-histidine biosynthesis; L-histidine from 5-phospho-alpha-D-ribose 1-diphosphate: step 4/9. The chain is 1-(5-phosphoribosyl)-5-[(5-phosphoribosylamino)methylideneamino] imidazole-4-carboxamide isomerase from Prosthecochloris aestuarii (strain DSM 271 / SK 413).